The chain runs to 123 residues: MPTIQQLIRKPRQPKVKRSKSQHLEQCPQKRGVCTRVYTTTPKKPNSAMRKVAKVRLTNGYEVISYIPGESHNLQEHSVVLIRGGRVKDLPGVRYHILRGVLDTQGVKDRKQRRSKYGAKRPK.

The segment at 1–28 (MPTIQQLIRKPRQPKVKRSKSQHLEQCP) is disordered. Over residues 9–21 (RKPRQPKVKRSKS) the composition is skewed to basic residues. Position 89 is a 3-methylthioaspartic acid (Asp89).

The protein belongs to the universal ribosomal protein uS12 family. In terms of assembly, part of the 30S ribosomal subunit. Contacts proteins S8 and S17. May interact with IF1 in the 30S initiation complex.

Its function is as follows. With S4 and S5 plays an important role in translational accuracy. In terms of biological role, interacts with and stabilizes bases of the 16S rRNA that are involved in tRNA selection in the A site and with the mRNA backbone. Located at the interface of the 30S and 50S subunits, it traverses the body of the 30S subunit contacting proteins on the other side and probably holding the rRNA structure together. The combined cluster of proteins S8, S12 and S17 appears to hold together the shoulder and platform of the 30S subunit. The polypeptide is Small ribosomal subunit protein uS12 (Ruegeria pomeroyi (strain ATCC 700808 / DSM 15171 / DSS-3) (Silicibacter pomeroyi)).